The chain runs to 81 residues: Cytochrome b559 subunit alpha (81 aa).

Residues 21–35 (VIHALTIPALFLAGW) form a helical membrane-spanning segment. His23 is a heme binding site.

It belongs to the PsbE/PsbF family. As to quaternary structure, heterodimer of an alpha subunit and a beta subunit. PSII is composed of 1 copy each of membrane proteins PsbA, PsbB, PsbC, PsbD, PsbE, PsbF, PsbH, PsbI, PsbJ, PsbK, PsbL, PsbM, PsbT, PsbX, PsbY, PsbZ, Psb30/Ycf12, peripheral proteins PsbO, CyanoQ (PsbQ), PsbU, PsbV and a large number of cofactors. It forms dimeric complexes. Heme b is required as a cofactor.

Its subcellular location is the cellular thylakoid membrane. Its function is as follows. This b-type cytochrome is tightly associated with the reaction center of photosystem II (PSII). PSII is a light-driven water:plastoquinone oxidoreductase that uses light energy to abstract electrons from H(2)O, generating O(2) and a proton gradient subsequently used for ATP formation. It consists of a core antenna complex that captures photons, and an electron transfer chain that converts photonic excitation into a charge separation. This chain is Cytochrome b559 subunit alpha, found in Synechococcus sp. (strain JA-3-3Ab) (Cyanobacteria bacterium Yellowstone A-Prime).